Consider the following 152-residue polypeptide: Small ribosomal subunit protein uS13 (152 aa).

Residues 133 to 152 form a disordered region; that stretch reads GQHTKTTGRRGRTVGVSKKK.

This sequence belongs to the universal ribosomal protein uS13 family.

The protein resides in the cytoplasm. Located at the top of the head of the 40S subunit, it contacts several helices of the 18S rRNA. In Spodoptera frugiperda (Fall armyworm), this protein is Small ribosomal subunit protein uS13 (RpS18).